The following is a 155-amino-acid chain: 6,7-dimethyl-8-ribityllumazine synthase (155 aa).

5-amino-6-(D-ribitylamino)uracil contacts are provided by residues F24, 58–60, and 82–84; these read AFE and AII. 87 to 88 contributes to the (2S)-2-hydroxy-3-oxobutyl phosphate binding site; that stretch reads ST. H90 acts as the Proton donor in catalysis. A 5-amino-6-(D-ribitylamino)uracil-binding site is contributed by F115. R129 contacts (2S)-2-hydroxy-3-oxobutyl phosphate.

The protein belongs to the DMRL synthase family.

The catalysed reaction is (2S)-2-hydroxy-3-oxobutyl phosphate + 5-amino-6-(D-ribitylamino)uracil = 6,7-dimethyl-8-(1-D-ribityl)lumazine + phosphate + 2 H2O + H(+). Its pathway is cofactor biosynthesis; riboflavin biosynthesis; riboflavin from 2-hydroxy-3-oxobutyl phosphate and 5-amino-6-(D-ribitylamino)uracil: step 1/2. Functionally, catalyzes the formation of 6,7-dimethyl-8-ribityllumazine by condensation of 5-amino-6-(D-ribitylamino)uracil with 3,4-dihydroxy-2-butanone 4-phosphate. This is the penultimate step in the biosynthesis of riboflavin. The chain is 6,7-dimethyl-8-ribityllumazine synthase from Chlorobium phaeobacteroides (strain BS1).